Here is a 225-residue protein sequence, read N- to C-terminus: GrpE protein homolog 2, mitochondrial (225 aa).

The transit peptide at 1–32 (MAVRSLWACRLRVQRLLAWSAAWESKGWPLPF) directs the protein to the mitochondrion. N6-acetyllysine is present on K142.

This sequence belongs to the GrpE family. Probable component of the PAM complex at least composed of a mitochondrial HSP70 protein, GRPEL1 or GRPEL2, TIMM44, TIMM16/PAM16 and TIMM14/DNAJC19.

It is found in the mitochondrion matrix. Functionally, essential component of the PAM complex, a complex required for the translocation of transit peptide-containing proteins from the inner membrane into the mitochondrial matrix in an ATP-dependent manner. Seems to control the nucleotide-dependent binding of mitochondrial HSP70 to substrate proteins. Stimulates ATPase activity of mt-HSP70. May also serve to modulate the interconversion of oligomeric (inactive) and monomeric (active) forms of mt-HSP70. In Pongo abelii (Sumatran orangutan), this protein is GrpE protein homolog 2, mitochondrial (GRPEL2).